Reading from the N-terminus, the 302-residue chain is Acetaldehyde dehydrogenase (302 aa).

Position 12–15 (12–15) interacts with NAD(+); sequence SGNI. Residue cysteine 127 is the Acyl-thioester intermediate of the active site. NAD(+) contacts are provided by residues 158 to 166 and asparagine 276; that span reads SAGPGTRQN.

This sequence belongs to the acetaldehyde dehydrogenase family.

It carries out the reaction acetaldehyde + NAD(+) + CoA = acetyl-CoA + NADH + H(+). In Geobacillus genomosp. 3, this protein is Acetaldehyde dehydrogenase (nahO).